The primary structure comprises 290 residues: L-proline cis-3-hydroxylase 2 (290 aa).

Fe cation is bound by residues histidine 107, aspartate 109, and histidine 158. Arginine 168 is a 2-oxoglutarate binding site.

It belongs to the L-proline cis-4-/cis-3-hydroxylase family. In terms of assembly, homodimer. Fe(2+) is required as a cofactor.

It catalyses the reaction L-proline + 2-oxoglutarate + O2 = cis-3-hydroxy-L-proline + succinate + CO2. With respect to regulation, inhibited by metal ions such as Co(2+), Zn(2+), Ni(2+) or Cu(2+). Is also inhibited by EDTA in vitro. Its function is as follows. Dioxygenase that catalyzes the 2-oxoglutarate-dependent selective hydroxylation of free L-proline to cis-3-hydroxy-L-proline (cis-3-Hyp). The chain is L-proline cis-3-hydroxylase 2 from Streptomyces sp.